Reading from the N-terminus, the 1481-residue chain is RNA helicase aquarius (1481 aa).

Positions 1-416 are helical region with structural similarity to ARM repeat domains; it reads MAAPAQPKKI…LVSRHERRIS (416 aa). Residues 417–1481 are required for assembly of the IB complex; it reads QIQQLNQMPL…DAESVPTETE (1065 aa). Residues 754–773 are disordered; sequence RSGKGKKRKDADGEEDDTEE. Residues Q801, Q806, and 826–831 each bind ATP; that span reads GTGKTD. Residue K1055 is modified to N6-acetyllysine. A compositionally biased stretch (acidic residues) spans 1396–1414; it reads EEGEEGQSQETEMEAEEET. The disordered stretch occupies residues 1396 to 1481; it reads EEGEEGQSQE…DAESVPTETE (86 aa). The span at 1418–1448 shows a compositional bias: polar residues; sequence QGNLTPSPADASLSQETPAAQPDCSSQTEDT. Over residues 1455 to 1468 the composition is skewed to low complexity; it reads ATAAEPVSAAAEAA.

It belongs to the CWF11 family. As to quaternary structure, identified in the spliceosome C complex. Component of the XAB2 complex, a multimeric protein complex composed of XAB2, PRPF19, AQR, ZNF830, ISY1, and PPIE. Identified in a pentameric intron-binding (IB) complex composed of AQR, XAB2, ISY1, ZNF830 and PPIE that is incorporated into the spliceosome as a preassembled complex. The IB complex does not contain PRPF19. Within the spliceosome, interacts with SNRPA1, SF3B1, SF3B3, SF3A1 and SF3A2.

Its subcellular location is the nucleus. The protein localises to the nucleoplasm. The catalysed reaction is ATP + H2O = ADP + phosphate + H(+). Involved in pre-mRNA splicing as component of the spliceosome. Intron-binding spliceosomal protein required to link pre-mRNA splicing and snoRNP (small nucleolar ribonucleoprotein) biogenesis. Plays a key role in position-dependent assembly of intron-encoded box C/D small snoRNP, splicing being required for snoRNP assembly. May act by helping the folding of the snoRNA sequence. Binds to intron of pre-mRNAs in a sequence-independent manner, contacting the region between snoRNA and the branchpoint of introns (40 nucleotides upstream of the branchpoint) during the late stages of splicing. Has ATP-dependent RNA helicase activity and can unwind double-stranded RNA molecules with a 3' overhang (in vitro). This chain is RNA helicase aquarius (Aqr), found in Mus musculus (Mouse).